A 145-amino-acid polypeptide reads, in one-letter code: Large ribosomal subunit protein uL16 (145 aa).

Belongs to the universal ribosomal protein uL16 family. In terms of assembly, part of the 50S ribosomal subunit.

Binds 23S rRNA and is also seen to make contacts with the A and possibly P site tRNAs. The protein is Large ribosomal subunit protein uL16 of Desulfitobacterium hafniense (strain DSM 10664 / DCB-2).